The chain runs to 400 residues: Tryptophan synthase beta chain (400 aa).

Lys-90 carries the post-translational modification N6-(pyridoxal phosphate)lysine.

Belongs to the TrpB family. Tetramer of two alpha and two beta chains. Pyridoxal 5'-phosphate is required as a cofactor.

The catalysed reaction is (1S,2R)-1-C-(indol-3-yl)glycerol 3-phosphate + L-serine = D-glyceraldehyde 3-phosphate + L-tryptophan + H2O. It participates in amino-acid biosynthesis; L-tryptophan biosynthesis; L-tryptophan from chorismate: step 5/5. In terms of biological role, the beta subunit is responsible for the synthesis of L-tryptophan from indole and L-serine. This is Tryptophan synthase beta chain from Bacillus velezensis (strain DSM 23117 / BGSC 10A6 / LMG 26770 / FZB42) (Bacillus amyloliquefaciens subsp. plantarum).